The following is a 160-amino-acid chain: Large ribosomal subunit protein eL21 (160 aa).

It belongs to the eukaryotic ribosomal protein eL21 family.

The sequence is that of Large ribosomal subunit protein eL21 (rpl21) from Dictyostelium discoideum (Social amoeba).